Reading from the N-terminus, the 87-residue chain is Venom serine protease inhibitor (87 aa).

Positions 1-23 (MPRLVLVSFLFLAIFSVFIGGFA) are cleaved as a signal peptide. Cystine bridges form between cysteine 27–cysteine 61, cysteine 36–cysteine 57, cysteine 40–cysteine 53, cysteine 44–cysteine 81, and cysteine 63–cysteine 75. One can recognise a TIL domain in the interval 27-81 (CPRNEIFTRCHAACQPSCARLARKPFCIKICKPGCICTSGYLRNKNNVCVPRSRC).

It belongs to the serine protease inhibitor-like (TIL domain-containing) family. In terms of tissue distribution, specifically expressed by the venom gland.

The protein localises to the secreted. In terms of biological role, antifibrinolytic and antimicrobial serine protease inhibitor. Inhibits trypsin, plasmin and microbial serine proteases but not chymotrypsin, thrombin and elastase. Inhibits the plasmin-mediated degradation of fibrin to fibrin degradation products. Also binds to bacterial and fungal surfaces and exhibits antimicrobial activity against fungi as well as Gram-positive and Gram-negative bacteria. In Apis cerana (Indian honeybee), this protein is Venom serine protease inhibitor.